The sequence spans 137 residues: uncharacterized protein (137 aa).

Belongs to the DCC thiol-disulfide oxidoreductase family.

This is an uncharacterized protein from Bacillus subtilis (strain 168).